We begin with the raw amino-acid sequence, 540 residues long: MAAKDVKFGNDARVKMLRGVNVLADAVKVTLGPKGRNVVLDKSFGAPTITKDGVSVAREIELEDKFENMGAQMVKEVASKANDAAGDGTTTATVLAQSIITEGLKAVAAGMNPMDLKRGIDKAVAAAVEELKALSVPCSDSKAIAQVGTISANSDETVGKLIAEAMDKVGKEGVITVEDGTGLQDELDVVEGMQFDRGYLSPYFINKPETGAVELDSPFILLADKKISNIRELLPVLEAVAKAGKPLLIIAEDVEGEALATLVVNTMRGIVKVAAVKAPGFGDRRKAMLQDIATLTAGTVISEEIGMELEKATLEDLGQAKRVVINKDTTTIIDGVGEEVAIQGRVTQIRQQIEEATSDYDREKLQERVAKLAGGVAVIKVGAATEVEMKEKKARVEDALHATRAAVEEGVVAGGGVALIRVASKITELKGQNEDQNVGIKVALRAMEAPLRQIVLNCGEEPSVVANTVKSGDGNYGYNAATEEYGNMIDMGILDPTKVTRSALQYAASVAGLMITTECMVTDLPKADAPDLGGAGGMGG.

ATP contacts are provided by residues T30 to P33, K51, D87 to T91, G415, N479 to A481, and D495.

The protein belongs to the chaperonin (HSP60) family. In terms of assembly, forms a cylinder of 14 subunits composed of two heptameric rings stacked back-to-back. Interacts with the co-chaperonin GroES.

It is found in the cytoplasm. The enzyme catalyses ATP + H2O + a folded polypeptide = ADP + phosphate + an unfolded polypeptide.. Together with its co-chaperonin GroES, plays an essential role in assisting protein folding. The GroEL-GroES system forms a nano-cage that allows encapsulation of the non-native substrate proteins and provides a physical environment optimized to promote and accelerate protein folding. This Pluralibacter gergoviae (Enterobacter gergoviae) protein is Chaperonin GroEL.